The following is a 128-amino-acid chain: Large ribosomal subunit protein eL22 (128 aa).

This sequence belongs to the eukaryotic ribosomal protein eL22 family. Component of the large ribosomal subunit.

The protein localises to the cytoplasm. Its function is as follows. Component of the large ribosomal subunit. The ribosome is a large ribonucleoprotein complex responsible for the synthesis of proteins in the cell. This chain is Large ribosomal subunit protein eL22 (RPL22), found in Gallus gallus (Chicken).